Here is a 530-residue protein sequence, read N- to C-terminus: Na(+)/H(+) antiporter NhaB (530 aa).

The next 11 membrane-spanning stretches (helical) occupy residues 23–43 (VAIIAFLIINPIVFFFINPFL), 45–65 (GWLLVVEFIFTLAMALKCYPL), 90–110 (LVANIEVLLLLVFMVAGIYFM), 113–133 (LLLFIFTKILLGIRSKVLLSI), 140–160 (AFLSAFLDALTVIAVIISVAV), 205–225 (LLMHAGVGTALGGVTTMVGEP), 238–258 (FGEFLLRMAPVTVPVFIAGML), 308–328 (IAVWLIVGLALHLAAVGLIGL), 351–371 (EEALPFTALLAVFFSIVAVII), 451–471 (ATPNGQAAFLFLLTSALAPLI), and 479–499 (VIMAFPYTLALSLVGFIGIMF).

Belongs to the NhaB Na(+)/H(+) (TC 2.A.34) antiporter family.

It is found in the cell inner membrane. It carries out the reaction 2 Na(+)(in) + 3 H(+)(out) = 2 Na(+)(out) + 3 H(+)(in). In terms of biological role, na(+)/H(+) antiporter that extrudes sodium in exchange for external protons. The sequence is that of Na(+)/H(+) antiporter NhaB from Vibrio cholerae serotype O1 (strain ATCC 39541 / Classical Ogawa 395 / O395).